A 537-amino-acid chain; its full sequence is 5,6-dihydroxyindole-2-carboxylic acid oxidase (537 aa).

An N-terminal signal peptide occupies residues 1 to 24 (MSAPKLLSLGCIFFPLLLFQQARA). Residues 25–477 (QFPRQCATVE…WPSREFSVPE (453 aa)) lie on the Lumenal, melanosome side of the membrane. Cystine bridges form between cysteine 30/cysteine 41, cysteine 42/cysteine 65, cysteine 56/cysteine 99, cysteine 101/cysteine 110, and cysteine 113/cysteine 122. Residues asparagine 96 and asparagine 104 are each glycosylated (N-linked (GlcNAc...) asparagine). Asparagine 181 carries an N-linked (GlcNAc...) asparagine glycan. Residues histidine 192, histidine 215, and histidine 224 each coordinate Zn(2+). 2 cysteine pairs are disulfide-bonded: cysteine 258–cysteine 261 and cysteine 290–cysteine 303. N-linked (GlcNAc...) asparagine glycosylation is found at asparagine 304 and asparagine 350. Zn(2+)-binding residues include histidine 377 and histidine 381. The N-linked (GlcNAc...) asparagine glycan is linked to asparagine 385. A Zn(2+)-binding site is contributed by histidine 404. Residues 478–501 (IIAIAVVGALLLVALIFGTASYLI) traverse the membrane as a helical segment. Over 502–537 (RARRSMDEANQPLLTDQYQCYAEEYEKLQNPNQSVV) the chain is Cytoplasmic.

The protein belongs to the tyrosinase family. Monomer. Interacts with ATP7A. Interacts with SLC45A2. The cofactor is Cu(2+). It depends on Zn(2+) as a cofactor. In terms of processing, glycosylated. In terms of tissue distribution, pigment cells.

The protein localises to the melanosome membrane. It carries out the reaction 2 5,6-dihydroxyindole-2-carboxylate + O2 = 2 indole-5,6-quinone-2-carboxylate + 2 H2O. It participates in pigment biosynthesis; melanin biosynthesis. Its activity is regulated as follows. The activity depends critically on the nature of the bound metal ion. Catalyzes the oxidation of 5,6-dihydroxyindole-2-carboxylic acid (DHICA) in the presence of bound Cu(2+) ions, but lacks activity in the presence of bound Zn(2+) ions. Its function is as follows. Plays a role in melanin biosynthesis. Catalyzes the oxidation of 5,6-dihydroxyindole-2-carboxylic acid (DHICA) into indole-5,6-quinone-2-carboxylic acid in the presence of bound Cu(2+) ions, but not in the presence of Zn(2+). May regulate or influence the type of melanin synthesized. Also to a lower extent, capable of hydroxylating tyrosine and producing melanin. The chain is 5,6-dihydroxyindole-2-carboxylic acid oxidase from Homo sapiens (Human).